The sequence spans 373 residues: GDP-mannose 4,6-dehydratase (373 aa).

Residues 9–14, 64–65, 86–90, and Tyr101 each bind NADP(+); these read GVTGQD, DL, and LGAMS. Residue Thr133 is part of the active site. Residues Glu135 and Tyr157 each act as nucleophile in the active site. Lys161, His187, and Arg192 together coordinate NADP(+).

The protein belongs to the NAD(P)-dependent epimerase/dehydratase family. GDP-mannose 4,6-dehydratase subfamily. NADP(+) is required as a cofactor.

The catalysed reaction is GDP-alpha-D-mannose = GDP-4-dehydro-alpha-D-rhamnose + H2O. The protein operates within nucleotide-sugar biosynthesis; GDP-L-fucose biosynthesis via de novo pathway; GDP-L-fucose from GDP-alpha-D-mannose: step 1/2. Its function is as follows. Catalyzes the conversion of GDP-D-mannose to GDP-4-dehydro-6-deoxy-D-mannose. The polypeptide is GDP-mannose 4,6-dehydratase (Escherichia coli O157:H7).